Here is a 202-residue protein sequence, read N- to C-terminus: Protein-methionine-sulfoxide reductase heme-binding subunit MsrQ (202 aa).

Helical transmembrane passes span 8–28 (IVWL…WLFW), 82–102 (LWCF…ELGI), 116–136 (PYLT…VTST), 149–169 (LLHN…LWSV), and 171–191 (IVSP…TWRY).

Belongs to the MsrQ family. In terms of assembly, heterodimer of a catalytic subunit (MsrP) and a heme-binding subunit (MsrQ). Requires FMN as cofactor. Heme b serves as cofactor.

It localises to the cell inner membrane. Its function is as follows. Part of the MsrPQ system that repairs oxidized periplasmic proteins containing methionine sulfoxide residues (Met-O), using respiratory chain electrons. Thus protects these proteins from oxidative-stress damage caused by reactive species of oxygen and chlorine generated by the host defense mechanisms. MsrPQ is essential for the maintenance of envelope integrity under bleach stress, rescuing a wide series of structurally unrelated periplasmic proteins from methionine oxidation. MsrQ provides electrons for reduction to the reductase catalytic subunit MsrP, using the quinone pool of the respiratory chain. This chain is Protein-methionine-sulfoxide reductase heme-binding subunit MsrQ, found in Klebsiella pneumoniae subsp. pneumoniae (strain ATCC 700721 / MGH 78578).